A 131-amino-acid chain; its full sequence is uncharacterized protein (131 aa).

A coiled-coil region spans residues 4 to 44 (QKPEQDVNKKIEELEKKVQELQEQLEKTKQAVKTVASILDN).

This is an uncharacterized protein from Sulfolobus islandicus filamentous virus (isolate Iceland/Hveragerdi) (SIFV).